The following is a 441-amino-acid chain: tRNA-2-methylthio-N(6)-dimethylallyladenosine synthase (441 aa).

The MTTase N-terminal domain occupies 2–117; the sequence is KGLYIKSYGC…LPELLVKAHR (116 aa). Cys-11, Cys-47, Cys-80, Cys-157, Cys-161, and Cys-164 together coordinate [4Fe-4S] cluster. Residues 143–374 form the Radical SAM core domain; it reads KNQETSAFIS…QKLLREQQLA (232 aa).

Belongs to the methylthiotransferase family. MiaB subfamily. In terms of assembly, monomer. [4Fe-4S] cluster is required as a cofactor.

It localises to the cytoplasm. It catalyses the reaction N(6)-dimethylallyladenosine(37) in tRNA + (sulfur carrier)-SH + AH2 + 2 S-adenosyl-L-methionine = 2-methylsulfanyl-N(6)-dimethylallyladenosine(37) in tRNA + (sulfur carrier)-H + 5'-deoxyadenosine + L-methionine + A + S-adenosyl-L-homocysteine + 2 H(+). In terms of biological role, catalyzes the methylthiolation of N6-(dimethylallyl)adenosine (i(6)A), leading to the formation of 2-methylthio-N6-(dimethylallyl)adenosine (ms(2)i(6)A) at position 37 in tRNAs that read codons beginning with uridine. The polypeptide is tRNA-2-methylthio-N(6)-dimethylallyladenosine synthase (Ehrlichia canis (strain Jake)).